Here is a 361-residue protein sequence, read N- to C-terminus: MIPKEEIMGIFEKYNKDEVTIVTVGSHTSLHILKGAKLEGFSTAVITTRDRDIPYKRFGVADKFIYVDKFSDISKEEIQQQLRDMNAIIVPHGSFIAYCGLDNVEDTFKVPMFGNRAILRWEAERDLEGQLLGGSGLRIPKKYGGPDDIDGPVMVKFPGARGGRGYFPCSTVEEFWRKIDEFKAKGILTEDDVAKAHIEEYVVGANYCIHYFYSPLKDQVELMGIDRRYESSIDGLVRVPAKDQLELSIDPSYVITGNFPVVIRESLLPQVFDMGDKLATKAKELVKPGMLGPFCLQSLCNENLELVVFEMSARVDGGTNTFMNGSPYSCLYTGEPLSMGQRIAREIKLALELKMIDKVIS.

Positions 27 and 94 each coordinate 5-amino-1-(5-phospho-beta-D-ribosyl)imidazole-4-carboxamide. The ATP-grasp domain occupies 116–348; the sequence is RAILRWEAER…MGQRIAREIK (233 aa). ATP-binding positions include 146–208 and Glu230; that span reads PDDI…ANYC. Asn258 is a binding site for 5-amino-1-(5-phospho-beta-D-ribosyl)imidazole-4-carboxamide. Mg(2+)-binding residues include Gln297 and Glu310.

Belongs to the phosphohexose mutase family. Mg(2+) serves as cofactor. Mn(2+) is required as a cofactor.

It catalyses the reaction 5-amino-1-(5-phospho-beta-D-ribosyl)imidazole-4-carboxamide + formate + ATP = 5-formamido-1-(5-phospho-D-ribosyl)imidazole-4-carboxamide + ADP + phosphate. The protein operates within purine metabolism; IMP biosynthesis via de novo pathway; 5-formamido-1-(5-phospho-D-ribosyl)imidazole-4-carboxamide from 5-amino-1-(5-phospho-D-ribosyl)imidazole-4-carboxamide (formate route): step 1/1. In terms of biological role, catalyzes the ATP- and formate-dependent formylation of 5-aminoimidazole-4-carboxamide-1-beta-d-ribofuranosyl 5'-monophosphate (AICAR) to 5-formaminoimidazole-4-carboxamide-1-beta-d-ribofuranosyl 5'-monophosphate (FAICAR) in the absence of folates. The chain is 5-formaminoimidazole-4-carboxamide-1-(beta)-D-ribofuranosyl 5'-monophosphate synthetase from Methanococcus maripaludis (strain C7 / ATCC BAA-1331).